We begin with the raw amino-acid sequence, 185 residues long: Peptidyl-tRNA hydrolase (185 aa).

Tyr14 is a binding site for tRNA. The active-site Proton acceptor is His19. TRNA is bound by residues Phe64, Asn66, and Asn112.

The protein belongs to the PTH family. In terms of assembly, monomer.

Its subcellular location is the cytoplasm. The catalysed reaction is an N-acyl-L-alpha-aminoacyl-tRNA + H2O = an N-acyl-L-amino acid + a tRNA + H(+). Hydrolyzes ribosome-free peptidyl-tRNAs (with 1 or more amino acids incorporated), which drop off the ribosome during protein synthesis, or as a result of ribosome stalling. Functionally, catalyzes the release of premature peptidyl moieties from peptidyl-tRNA molecules trapped in stalled 50S ribosomal subunits, and thus maintains levels of free tRNAs and 50S ribosomes. The sequence is that of Peptidyl-tRNA hydrolase from Lacticaseibacillus paracasei (strain ATCC 334 / BCRC 17002 / CCUG 31169 / CIP 107868 / KCTC 3260 / NRRL B-441) (Lactobacillus paracasei).